The chain runs to 360 residues: Probable protein phosphatase 2C 54 (360 aa).

Residues 1–39 (MCVEESEGAERLDFGEPAAAAADAGKSKSKSPDELPSPR) are disordered. Positions 65 to 325 (RSGDWSDIGG…DNLTAVLVSF (261 aa)) constitute a PPM-type phosphatase domain. 4 residues coordinate Mn(2+): Asp-109, Gly-110, Asp-273, and Asp-316.

It belongs to the PP2C family. Mg(2+) is required as a cofactor. Requires Mn(2+) as cofactor.

It carries out the reaction O-phospho-L-seryl-[protein] + H2O = L-seryl-[protein] + phosphate. The catalysed reaction is O-phospho-L-threonyl-[protein] + H2O = L-threonyl-[protein] + phosphate. In Oryza sativa subsp. japonica (Rice), this protein is Probable protein phosphatase 2C 54.